Consider the following 578-residue polypeptide: Translation initiation factor eIF2B subunit gamma (578 aa).

Phosphoserine is present on residues serine 296 and serine 300. Disordered regions lie at residues 298–337 (QASF…SATS) and 535–578 (DDSV…LFER). Residue threonine 306 is modified to Phosphothreonine. Acidic residues predominate over residues 544–578 (EIAEETDSDDRSDEDSDDSEYTDEYEYEDDGLFER).

The protein belongs to the eIF-2B gamma/epsilon subunits family. In terms of assembly, component of the translation initiation factor 2B (eIF2B) complex which is a heterodecamer of two sets of five different subunits: alpha, beta, gamma, delta and epsilon. Subunits alpha, beta and delta comprise a regulatory subcomplex and subunits epsilon and gamma comprise a catalytic subcomplex. Within the complex, the hexameric regulatory complex resides at the center, with the two heterodimeric catalytic subcomplexes bound on opposite sides.

Its subcellular location is the cytoplasm. The protein resides in the cytosol. Its function is as follows. Acts as a component of the translation initiation factor 2B (eIF2B) complex, which catalyzes the exchange of GDP for GTP on the eukaryotic initiation factor 2 (eIF2) complex gamma subunit. Its guanine nucleotide exchange factor activity is repressed when bound to eIF2 complex phosphorylated on the alpha subunit, thereby limiting the amount of methionyl-initiator methionine tRNA available to the ribosome and consequently global translation is repressed. It activates the synthesis of GCN4 in yeast under amino acid starvation conditions by suppressing the inhibitory effects of multiple AUG codons present in the leader of GCN4 mRNA. It may promote either repression or activation of GCN4 expression depending on amino acid availability. GCD1 stabilizes the interaction between eIF2 and GCD6 and stimulates the catalytic activity in vitro. The chain is Translation initiation factor eIF2B subunit gamma (GCD1) from Saccharomyces cerevisiae (strain ATCC 204508 / S288c) (Baker's yeast).